Here is a 239-residue protein sequence, read N- to C-terminus: MTKAPIAGNRTGRKLGQRVKNKKMKASSRQWLQRHINDPYVQRAQLEGYRARAAFKLLEIDEKHHILRGAKRIIDLGAAPGSWSQIAAKVTGSTDEDIRVAAIDFLEMAQLPGVKILQLDFLDPTAPEKLLEAVGGTPDLVISDMAAPTTGHHRTDHLRTMHLCEVAAQFAVEVLGEGGHFLTKTFQGGTERELLAMLKQNFRQVVHVKPNASRAESVEMFLLAKGFKGRKVEGDAEKA.

Residues 1 to 20 (MTKAPIAGNRTGRKLGQRVK) form a disordered region. Over residues 11-20 (TGRKLGQRVK) the composition is skewed to basic residues. The S-adenosyl-L-methionine site is built by Gly-81, Trp-83, Asp-104, Asp-120, and Asp-144. Lys-184 (proton acceptor) is an active-site residue.

This sequence belongs to the class I-like SAM-binding methyltransferase superfamily. RNA methyltransferase RlmE family.

It is found in the cytoplasm. The catalysed reaction is uridine(2552) in 23S rRNA + S-adenosyl-L-methionine = 2'-O-methyluridine(2552) in 23S rRNA + S-adenosyl-L-homocysteine + H(+). Functionally, specifically methylates the uridine in position 2552 of 23S rRNA at the 2'-O position of the ribose in the fully assembled 50S ribosomal subunit. The protein is Ribosomal RNA large subunit methyltransferase E of Rhizobium leguminosarum bv. trifolii (strain WSM2304).